Reading from the N-terminus, the 302-residue chain is Oxygen-dependent coproporphyrinogen-III oxidase (302 aa).

Ser94 provides a ligand contact to substrate. Residues His98 and His108 each coordinate a divalent metal cation. The active-site Proton donor is His108. 110-112 serves as a coordination point for substrate; that stretch reads NVR. A divalent metal cation-binding residues include His147 and His177. Residues 242–277 are important for dimerization; the sequence is YVEFNLVFDRGTLFGLQSGGRAESILMSMPPVANWR. Substrate is bound at residue 260–262; it reads GGR.

It belongs to the aerobic coproporphyrinogen-III oxidase family. Homodimer. The cofactor is a divalent metal cation.

Its subcellular location is the cytoplasm. It catalyses the reaction coproporphyrinogen III + O2 + 2 H(+) = protoporphyrinogen IX + 2 CO2 + 2 H2O. It participates in porphyrin-containing compound metabolism; protoporphyrin-IX biosynthesis; protoporphyrinogen-IX from coproporphyrinogen-III (O2 route): step 1/1. Functionally, involved in the heme biosynthesis. Catalyzes the aerobic oxidative decarboxylation of propionate groups of rings A and B of coproporphyrinogen-III to yield the vinyl groups in protoporphyrinogen-IX. The polypeptide is Oxygen-dependent coproporphyrinogen-III oxidase (Ralstonia pickettii (strain 12J)).